A 1059-amino-acid polypeptide reads, in one-letter code: Endo-1,4-beta-xylanase A (1059 aa).

Positions 1–30 (MQVRKRRGLLDVSTAVLVGILAGFLGVVLA) are cleaved as a signal peptide. The A-1 stretch occupies residues 47–199 (SSLETVLALS…LDKVQVLAPK (153 aa)). The A-2 stretch occupies residues 200–354 (ESGPKVIYET…DDVKIVDTTS (155 aa)). Positions 364–692 (EKEIPALKEV…KLAYWAIVAP (329 aa)) constitute a GH10 domain. Catalysis depends on Glu-502, which acts as the Proton donor. Glu-608 functions as the Nucleophile in the catalytic mechanism. 2 consecutive CBM-cenC domains span residues 700–870 (KESR…LEGI) and 871–1059 (MVAT…RLIK).

This sequence belongs to the glycosyl hydrolase 10 (cellulase F) family.

The catalysed reaction is Endohydrolysis of (1-&gt;4)-beta-D-xylosidic linkages in xylans.. This Thermotoga maritima (strain ATCC 43589 / DSM 3109 / JCM 10099 / NBRC 100826 / MSB8) protein is Endo-1,4-beta-xylanase A (xynA).